A 214-amino-acid chain; its full sequence is Nascent polypeptide-associated complex subunit alpha (214 aa).

2 disordered regions span residues 1 to 57 (MSNP…NEKK) and 119 to 179 (ASAA…EDKD). Over residues 22 to 38 (AEDEGSDSSDSEGEGEV) the composition is skewed to acidic residues. The NAC-A/B domain maps to 52 to 117 (SRNEKKARKS…AKIEDLNSQA (66 aa)). The span at 119–128 (ASAAAQLAAQ) shows a compositional bias: low complexity. The segment covering 129 to 159 (ESHDHAGHDHSGHDHSHDHGKGKAVDTGDEK) has biased composition (basic and acidic residues). A compositionally biased stretch (acidic residues) spans 160–171 (KEEEEDDTEEVD). The UBA domain maps to 175 to 214 (LEDKDIELVMTQASVSRNKAVKALKENDNDIVNSIMALSI).

It belongs to the NAC-alpha family. As to quaternary structure, part of the nascent polypeptide-associated complex (NAC), consisting of EGD2 and EGD1. NAC associates with ribosomes via EGD1.

The protein resides in the cytoplasm. The protein localises to the nucleus. Functionally, component of the nascent polypeptide-associated complex (NAC), a dynamic component of the ribosomal exit tunnel, protecting the emerging polypeptides from interaction with other cytoplasmic proteins to ensure appropriate nascent protein targeting. The NAC complex also promotes mitochondrial protein import by enhancing productive ribosome interactions with the outer mitochondrial membrane and blocks the inappropriate interaction of ribosomes translating non-secretory nascent polypeptides with translocation sites in the membrane of the endoplasmic reticulum. EGD2 may also be involved in transcription regulation. In Sclerotinia sclerotiorum (strain ATCC 18683 / 1980 / Ss-1) (White mold), this protein is Nascent polypeptide-associated complex subunit alpha (egd2).